A 97-amino-acid polypeptide reads, in one-letter code: Large ribosomal subunit protein bL27 (97 aa).

A compositionally biased stretch (polar residues) spans 1–10 (MVKLNLSNLQ). Positions 1 to 12 (MVKLNLSNLQHF) are excised as a propeptide. The disordered stretch occupies residues 1–38 (MVKLNLSNLQHFAHKKGGGSTSNGRDSQAKRLGAKAAD).

The protein belongs to the bacterial ribosomal protein bL27 family. In terms of processing, the N-terminus is cleaved by ribosomal processing cysteine protease Prp.

The sequence is that of Large ribosomal subunit protein bL27 from Streptococcus equi subsp. zooepidemicus (strain H70).